The primary structure comprises 424 residues: MKLEMICTGEEVLSGQILDTNAAWFANVMMDMGVETQYRVTVGDRLEDLVAVFRERSLHADVILVNGGLGPTSDDMSAQAMAMAKGEPLVENALWRHTLEEWFARYNREMPRSNLKQAMLPASAIMVDNPVGTACGFRVKLNNAWLFFTPGVPSELKHMVHEQFIPFIRSEYELDEQSSVEKLLTLGQGESAIGDILSEVLLPEGISFGYRSFMPYIEVKIFARGQKAMAQLGSITSQVKHALGAVVVAEGKTSLAAEIHARLFQSGFSLSVAESCTGGMIASQLTDFPGSSSYFQQGLVTYSNESKVKLLGVLPQTLDDHGAVSIATVEAMAIGARNILDSDFALATSGIAGPDGGTEDKPVGTVAIALATKFGTYSQMVKLPRRSRELVRNLTAAIALDMLRRALLDEAVIVDYPSVQRLAK.

Belongs to the CinA family.

The polypeptide is CinA-like protein (Shewanella denitrificans (strain OS217 / ATCC BAA-1090 / DSM 15013)).